Reading from the N-terminus, the 873-residue chain is Ectonucleotide pyrophosphatase/phosphodiesterase family member 3 (873 aa).

Residues 1–11 lie on the Cytoplasmic side of the membrane; sequence MESMLTLAMEQ. The chain crosses the membrane as a helical; Signal-anchor for type II membrane protein span at residues 12–30; sequence PVKRNTLKKYKIACIVLLA. The Extracellular segment spans residues 31–873; sequence LLVIVSLGLG…TYLPTFETTI (843 aa). 2 SMB domains span residues 51 to 93 and 94 to 138; these read QGSC…VEST and RIWM…GETS. 10 disulfide bridges follow: C54–C71, C58–C89, C69–C82, C75–C81, C98–C115, C103–C133, C113–C126, C119–C125, C144–C190, and C152–C364. Positions 78–80 match the Cell attachment site motif; sequence RGD. Residues 160–544 form a phosphodiesterase region; sequence PVILFSMDGF…HGSLNHLLKV (385 aa). Residue D167 coordinates Zn(2+). K204 serves as a coordination point for ATP. T205 is a binding site for Zn(2+). T205 functions as the Nucleophile in the catalytic mechanism. N226 lines the ATP pocket. N236 is a glycosylation site (N-linked (GlcNAc...) asparagine). E275 contacts ATP. N-linked (GlcNAc...) asparagine glycosylation occurs at N279. Y289 provides a ligand contact to ATP. N-linked (GlcNAc...) asparagine glycosylation occurs at N290. Zn(2+) is bound by residues D325, H329, D372, and H373. Intrachain disulfides connect C380/C477, C428/C816, C561/C621, C573/C677, C575/C662, and C785/C795. Residue N425 is glycosylated (N-linked (GlcNAc...) asparagine). H482 contributes to the Zn(2+) binding site. N-linked (GlcNAc...) asparagine glycans are attached at residues N532, N592, N685, and N697. The nuclease stretch occupies residues 580 to 873; sequence NSIQLEQVNQ…TYLPTFETTI (294 aa). Residues D750, N752, D754, H756, and D758 each contribute to the Ca(2+) site. N787 carries an N-linked (GlcNAc...) asparagine glycan.

As to quaternary structure, monomer and homodimer. Zn(2+) is required as a cofactor. Post-translationally, N-glycosylated. N-glycosylation is necessary for normal transport to the cell membrane, but is not the apical targeting signal.

It localises to the cell membrane. It is found in the apical cell membrane. The protein resides in the secreted. The enzyme catalyses a ribonucleoside 5'-triphosphate + H2O = a ribonucleoside 5'-phosphate + diphosphate + H(+). The catalysed reaction is ATP + H2O = AMP + diphosphate + H(+). It carries out the reaction CTP + H2O = CMP + diphosphate + H(+). It catalyses the reaction GTP + H2O = GMP + diphosphate + H(+). The enzyme catalyses UTP + H2O = UMP + diphosphate + H(+). The catalysed reaction is UDP-N-acetyl-alpha-D-glucosamine + H2O = N-acetyl-alpha-D-glucosamine 1-phosphate + UMP + 2 H(+). It carries out the reaction P(1),P(3)-bis(5'-adenosyl) triphosphate + H2O = AMP + ADP + 2 H(+). It catalyses the reaction P(1),P(4)-bis(5'-adenosyl) tetraphosphate + H2O = AMP + ATP + 2 H(+). The enzyme catalyses P(1),P(5)-bis(5'-adenosyl) pentaphosphate + H2O = adenosine 5'-tetraphosphate + AMP + 2 H(+). The catalysed reaction is P(1),P(4)-bis(5'-guanosyl) tetraphosphate + H2O = GMP + GTP + 2 H(+). It carries out the reaction Hydrolytically removes 5'-nucleotides successively from the 3'-hydroxy termini of 3'-hydroxy-terminated oligonucleotides.. Hydrolase that metabolizes extracellular nucleotides, including ATP, GTP, UTP and CTP. Limits mast cells and basophils response during inflammation and during the chronic phases of allergic responses by eliminating extracellular ATP, a signaling molecule activating these cells in an autocrine manner. Metabolizes extracellular ATP in the lumen of the small intestine, and thereby prevents ATP-induced apoptosis of intestinal plasmacytoid dendritic cells. Has a broad specificity and can also hydrolyze UDP-GlcNAc into UMP and GlcNAc-1-phosphate and potentially several other intracellular nucleotide sugars, including UDP-GalNAc, CMP-NeuAc, GDP-Fuc, and UDP-GlcA. Thereby, could modulate glycan biosynthesis and protein glycosylation. Can hydrolyze extracellular dinucleoside polyphosphates, including the vasoactive adenosine polyphosphates as well. In addition, displays an alkaline phosphodiesterase activity in vitro. The polypeptide is Ectonucleotide pyrophosphatase/phosphodiesterase family member 3 (Pongo abelii (Sumatran orangutan)).